A 60-amino-acid polypeptide reads, in one-letter code: Small integral membrane protein 3 (60 aa).

Residues 20–40 (IWVIVLIILATIVIMTSLLLC) traverse the membrane as a helical segment.

The protein localises to the membrane. This is Small integral membrane protein 3 (SMIM3) from Homo sapiens (Human).